A 199-amino-acid chain; its full sequence is Chaperone protein TorD (199 aa).

Belongs to the TorD/DmsD family. TorD subfamily.

The protein resides in the cytoplasm. Functionally, involved in the biogenesis of TorA. Acts on TorA before the insertion of the molybdenum cofactor and, as a result, probably favors a conformation of the apoenzyme that is competent for acquiring the cofactor. The protein is Chaperone protein TorD of Escherichia coli O157:H7 (strain EC4115 / EHEC).